The following is a 238-amino-acid chain: Probable transcriptional regulatory protein CPn_0573/CP_0176/CPj0573/CpB0595 (238 aa).

The segment at methionine 1–lysine 20 is disordered. Basic residues predominate over residues asparagine 9–lysine 20.

This sequence belongs to the TACO1 family.

It is found in the cytoplasm. This Chlamydia pneumoniae (Chlamydophila pneumoniae) protein is Probable transcriptional regulatory protein CPn_0573/CP_0176/CPj0573/CpB0595.